Reading from the N-terminus, the 131-residue chain is MAKRNVATKKKVVKKNIARGVVYISATFNNTNITITDEMGNVICWSTAGGLGFKGSKKSTPYAAQQAVESALSKAKEHGVKEVGIKVQGSGSGRETAIKSVGATEGVKVLWIKDITPLSHNGCRPPKRRRV.

The protein belongs to the universal ribosomal protein uS11 family. Part of the 30S ribosomal subunit. Interacts with proteins S7 and S18. Binds to IF-3.

Functionally, located on the platform of the 30S subunit, it bridges several disparate RNA helices of the 16S rRNA. Forms part of the Shine-Dalgarno cleft in the 70S ribosome. The polypeptide is Small ribosomal subunit protein uS11 (Helicobacter acinonychis (strain Sheeba)).